The sequence spans 207 residues: MTSPAPTIGVLALQGDVREHVAALEAGGARAVTVRRVAELRGVDGLVLPGGESTTIDRLLRVFELREVLRERIAEGLPVYGSCAGMILLADRVLDGAPDQQTLGGLDVTVRRNAFGRQVDSWEEDLPLPEITRGGPPVEGIFIRAPWVEEAGEEVRVLARLGSGPAAGRIVAVRQGDLLATSFHPEITGDDRVHRYFVDVVRERVAG.

Gly51–Ser53 is a binding site for L-glutamine. The active-site Nucleophile is the Cys83. L-glutamine is bound by residues Arg112 and Ile143 to Arg144. Active-site charge relay system residues include His184 and Glu186.

The protein belongs to the glutaminase PdxT/SNO family. As to quaternary structure, in the presence of PdxS, forms a dodecamer of heterodimers. Only shows activity in the heterodimer.

The catalysed reaction is aldehydo-D-ribose 5-phosphate + D-glyceraldehyde 3-phosphate + L-glutamine = pyridoxal 5'-phosphate + L-glutamate + phosphate + 3 H2O + H(+). It catalyses the reaction L-glutamine + H2O = L-glutamate + NH4(+). It functions in the pathway cofactor biosynthesis; pyridoxal 5'-phosphate biosynthesis. In terms of biological role, catalyzes the hydrolysis of glutamine to glutamate and ammonia as part of the biosynthesis of pyridoxal 5'-phosphate. The resulting ammonia molecule is channeled to the active site of PdxS. The sequence is that of Pyridoxal 5'-phosphate synthase subunit PdxT from Kineococcus radiotolerans (strain ATCC BAA-149 / DSM 14245 / SRS30216).